The chain runs to 912 residues: Protein translocase subunit SecA (912 aa).

Residues Q86, 104–108, and D494 contribute to the ATP site; that span reads GEGKT. Positions 860–912 are disordered; sequence EAPEKPAQLQYTAPGEDGASQTRVEGRSSGRSGNPAKAAQDGARKPAPKKKKR.

This sequence belongs to the SecA family. In terms of assembly, monomer and homodimer. Part of the essential Sec protein translocation apparatus which comprises SecA, SecYEG and auxiliary proteins SecDF. Other proteins may also be involved.

It localises to the cell membrane. It is found in the cytoplasm. It catalyses the reaction ATP + H2O + cellular proteinSide 1 = ADP + phosphate + cellular proteinSide 2.. Its function is as follows. Part of the Sec protein translocase complex. Interacts with the SecYEG preprotein conducting channel. Has a central role in coupling the hydrolysis of ATP to the transfer of proteins into and across the cell membrane, serving as an ATP-driven molecular motor driving the stepwise translocation of polypeptide chains across the membrane. This is Protein translocase subunit SecA from Arthrobacter sp. (strain FB24).